Reading from the N-terminus, the 139-residue chain is Ribonuclease VapC3 (139 aa).

In terms of domain architecture, PINc spans 14-121 (EAIVLDTGAF…VATDDYTLQR (108 aa)). A Mg(2+)-binding site is contributed by aspartate 19.

Belongs to the PINc/VapC protein family. It depends on Mg(2+) as a cofactor.

In terms of biological role, toxic component of a type II toxin-antitoxin (TA) system. An RNase. The chain is Ribonuclease VapC3 from Aeropyrum pernix (strain ATCC 700893 / DSM 11879 / JCM 9820 / NBRC 100138 / K1).